Here is a 245-residue protein sequence, read N- to C-terminus: Adenosylcobinamide-GDP ribazoletransferase (245 aa).

5 helical membrane-spanning segments follow: residues 31–51 (FGRA…VLYA), 61–81 (PLLQ…ALHL), 113–133 (VAVV…AALL), 138–158 (AGLL…LFLT), and 192–212 (LAFG…FAWL).

It belongs to the CobS family. The cofactor is Mg(2+).

Its subcellular location is the cell inner membrane. The catalysed reaction is alpha-ribazole + adenosylcob(III)inamide-GDP = adenosylcob(III)alamin + GMP + H(+). It carries out the reaction alpha-ribazole 5'-phosphate + adenosylcob(III)inamide-GDP = adenosylcob(III)alamin 5'-phosphate + GMP + H(+). The protein operates within cofactor biosynthesis; adenosylcobalamin biosynthesis; adenosylcobalamin from cob(II)yrinate a,c-diamide: step 7/7. Functionally, joins adenosylcobinamide-GDP and alpha-ribazole to generate adenosylcobalamin (Ado-cobalamin). Also synthesizes adenosylcobalamin 5'-phosphate from adenosylcobinamide-GDP and alpha-ribazole 5'-phosphate. The polypeptide is Adenosylcobinamide-GDP ribazoletransferase (Pseudomonas aeruginosa (strain UCBPP-PA14)).